A 949-amino-acid polypeptide reads, in one-letter code: MSEYKDTLNLPETGFPMRGDLAKREPEMLQRWYQEDLYGAIRQAKKGKKSFVLHDGPPYANGDIHIGHALNKILKDVIIKSKTLSGFDAPYIPGWDCHGLPIELMVEKKVGKPGQKVTAAEFREKCREYAAGQVEGQKESFKRLGILGEWDKPYRTMDFVTEANIIRALGKIADNGHLLKGFKPVHWCTDCGSALAEAEVEYKNKVSPSIDVRFKAADEAAVLAKFGLAAGHEGKGDVSIVIWTTTPWTLPANRAVCLRADLEYVLIQVEGEQPERIIVASELAKSVMDRAGIEHFHNLGFATGADLELVQFQHPFYSFTVPAILGDHVTTDSGTGVVHTAPGHGQEDFAVGQQYGLEVANPVGSNGVYLPDTELFAGQHVFKANDSVLEVLKEKGALLHHHAYEHSYPHCWRHKTPIIFRATPQWFVSMEQAGLREQALTAIKGVHWMPDWGQSRIEGMVAGRPEWCISRQRTWGVPIALFVHKETAELHPNSADLIEKVAQLVEQKGIQAWWDLDTAELLGAEDAANYEKVLDTLDVWFDSGVTHSAVVDARQEFNGAEADMYLEGSDQHRGWFQSSLISSVAMKGKAPYKEVLTHGFVVDGQGRKMSKSIGNVVAPQDVTNKLGADILRLWVASTDYTGEVAVSDEILKRSADAYRRIRNTARFFLANLNGFNPTTDIIPVEDMVALDRWAVGRALAAQQEIIQAYQDYNLHAVVQRLMNFCSIEMGSFYLDVIKDRQYTAKRGGHAQRSCQTALFFIVEALVRWMAPIMSFTADEIWNAMPAQQADGSARDKFVFTTEWFDGLFGLAEGEELNNAFWNDIQKVRGSVNKLLENARNEKLIGGSLQAELVLFADDSLASKLAKLGDELRFVLLTSKAVVKPLAEKSEAAQATDIDGLFVQVNKTEAEKCDRCWHHTPDVGTIAGHTTICGRCVSNVEGEGEVRKFA.

The short motif at 58-68 is the 'HIGH' region element; that stretch reads PYANGDIHIGH. Glu-567 lines the L-isoleucyl-5'-AMP pocket. The short motif at 608–612 is the 'KMSKS' region element; the sequence is KMSKS. Lys-611 is a binding site for ATP. Residues Cys-912, Cys-915, Cys-932, and Cys-935 each contribute to the Zn(2+) site.

This sequence belongs to the class-I aminoacyl-tRNA synthetase family. IleS type 1 subfamily. Monomer. The cofactor is Zn(2+).

Its subcellular location is the cytoplasm. The enzyme catalyses tRNA(Ile) + L-isoleucine + ATP = L-isoleucyl-tRNA(Ile) + AMP + diphosphate. Functionally, catalyzes the attachment of isoleucine to tRNA(Ile). As IleRS can inadvertently accommodate and process structurally similar amino acids such as valine, to avoid such errors it has two additional distinct tRNA(Ile)-dependent editing activities. One activity is designated as 'pretransfer' editing and involves the hydrolysis of activated Val-AMP. The other activity is designated 'posttransfer' editing and involves deacylation of mischarged Val-tRNA(Ile). The protein is Isoleucine--tRNA ligase of Vibrio cholerae serotype O1 (strain ATCC 39315 / El Tor Inaba N16961).